The following is a 693-amino-acid chain: Sulfite reductase 1 [ferredoxin], chloroplastic (693 aa).

The transit peptide at 1-62 (MTTSFGAAIN…PSSIVRAVST (62 aa)) directs the protein to the chloroplast. Residues cysteine 502, cysteine 508, cysteine 548, and cysteine 552 each contribute to the [4Fe-4S] cluster site. Cysteine 552 is a binding site for siroheme.

Belongs to the nitrite and sulfite reductase 4Fe-4S domain family. As to quaternary structure, monomer. Interacts with ferredoxin. Siroheme serves as cofactor. It depends on [4Fe-4S] cluster as a cofactor. Phosphorylated; this phosphorylation reduces DNA-binding. Expressed in leaves, stems, roots and petals.

It is found in the plastid. It localises to the chloroplast stroma. The protein resides in the chloroplast nucleoid. The protein localises to the plastid stroma. It catalyses the reaction hydrogen sulfide + 6 oxidized [2Fe-2S]-[ferredoxin] + 3 H2O = sulfite + 6 reduced [2Fe-2S]-[ferredoxin] + 7 H(+). Essential protein with sulfite reductase activity required in assimilatory sulfate reduction pathway during both primary and secondary metabolism and thus involved in development and growth. Its function is as follows. DNA-binding protein that binds to both double-stranded and single-stranded DNA without significant sequence specificity to reversibly repress the transcriptional activity of chloroplast nucleoids by promoting DNA compaction and possibly regulate DNA replication. The sequence is that of Sulfite reductase 1 [ferredoxin], chloroplastic (SIR1) from Nicotiana tabacum (Common tobacco).